Here is a 207-residue protein sequence, read N- to C-terminus: uncharacterized protein (207 aa).

Residues glycine 51 and aspartate 72 each contribute to the S-adenosyl-L-methionine site.

The protein belongs to the methyltransferase superfamily. YrrT family.

Its function is as follows. Could be a S-adenosyl-L-methionine-dependent methyltransferase. This is an uncharacterized protein from Staphylococcus carnosus (strain TM300).